Consider the following 417-residue polypeptide: Serine--tRNA ligase (417 aa).

226–228 is an L-serine binding site; that stretch reads TSE. ATP contacts are provided by residues 257 to 259 and Val-273; that span reads RRE. Glu-280 contributes to the L-serine binding site. ATP is bound at residue 344 to 347; it reads EVTS. Residue Thr-379 coordinates L-serine.

Belongs to the class-II aminoacyl-tRNA synthetase family. Type-1 seryl-tRNA synthetase subfamily. Homodimer. The tRNA molecule binds across the dimer.

The protein resides in the cytoplasm. It carries out the reaction tRNA(Ser) + L-serine + ATP = L-seryl-tRNA(Ser) + AMP + diphosphate + H(+). The catalysed reaction is tRNA(Sec) + L-serine + ATP = L-seryl-tRNA(Sec) + AMP + diphosphate + H(+). It functions in the pathway aminoacyl-tRNA biosynthesis; selenocysteinyl-tRNA(Sec) biosynthesis; L-seryl-tRNA(Sec) from L-serine and tRNA(Sec): step 1/1. Catalyzes the attachment of serine to tRNA(Ser). Is also able to aminoacylate tRNA(Sec) with serine, to form the misacylated tRNA L-seryl-tRNA(Sec), which will be further converted into selenocysteinyl-tRNA(Sec). The polypeptide is Serine--tRNA ligase (Tropheryma whipplei (strain Twist) (Whipple's bacillus)).